A 275-amino-acid chain; its full sequence is Spermidine/putrescine transport system permease protein PotB (275 aa).

A helical membrane pass occupies residues 1–21; that stretch reads MIVTIVGWLVLFVFLPNLMII. Residues 22-60 are Periplasmic-facing; it reads GTSFLTRDDASFVKMVFTLDNYTRLLDPLYFEVLLHSLN. The 207-residue stretch at 55–261 folds into the ABC transmembrane type-1 domain; it reads LLHSLNMALI…IVMGLMLLVY (207 aa). Residues 61–81 traverse the membrane as a helical segment; sequence MALIATLACLVLGYPFAWFLA. The Cytoplasmic portion of the chain corresponds to 82-89; the sequence is KLPHKVRP. A helical membrane pass occupies residues 90-110; that stretch reads LLLFLLIVPFWTNSLIRIYGL. Over 111–135 the chain is Periplasmic; sequence KIFLSTKGYLNEFLLWLGVIDTPIR. The chain crosses the membrane as a helical span at residues 136 to 156; the sequence is IMFTPSAVIIGLVYILLPFMV. At 157-187 the chain is on the cytoplasmic side; the sequence is MPLYSSIEKLDKPLLEAARDLGASKLQTFIR. The chain crosses the membrane as a helical span at residues 188-208; it reads IIIPLTMPGIIAGCLLVMLPA. The Periplasmic portion of the chain corresponds to 209–241; sequence MGLFYVSDLMGGAKNLLIGNVIKVQFLNIRDWP. Residues 242 to 262 form a helical membrane-spanning segment; the sequence is FGAATSITLTIVMGLMLLVYW. Residues 263 to 275 lie on the Cytoplasmic side of the membrane; the sequence is RASRLLNKKVELE.

Belongs to the binding-protein-dependent transport system permease family. CysTW subfamily.

The protein localises to the cell inner membrane. Its function is as follows. Required for the activity of the bacterial periplasmic transport system of putrescine and spermidine. The sequence is that of Spermidine/putrescine transport system permease protein PotB (potB) from Escherichia coli (strain K12).